Consider the following 94-residue polypeptide: Co-chaperonin GroES (94 aa).

Belongs to the GroES chaperonin family. As to quaternary structure, heptamer of 7 subunits arranged in a ring. Interacts with the chaperonin GroEL.

It localises to the cytoplasm. In terms of biological role, together with the chaperonin GroEL, plays an essential role in assisting protein folding. The GroEL-GroES system forms a nano-cage that allows encapsulation of the non-native substrate proteins and provides a physical environment optimized to promote and accelerate protein folding. GroES binds to the apical surface of the GroEL ring, thereby capping the opening of the GroEL channel. The protein is Co-chaperonin GroES of Streptococcus pneumoniae (strain Taiwan19F-14).